A 206-amino-acid polypeptide reads, in one-letter code: N-(5'-phosphoribosyl)anthranilate isomerase (206 aa).

The protein belongs to the TrpF family.

The catalysed reaction is N-(5-phospho-beta-D-ribosyl)anthranilate = 1-(2-carboxyphenylamino)-1-deoxy-D-ribulose 5-phosphate. Its pathway is amino-acid biosynthesis; L-tryptophan biosynthesis; L-tryptophan from chorismate: step 3/5. The chain is N-(5'-phosphoribosyl)anthranilate isomerase from Pseudomonas putida (strain GB-1).